Consider the following 457-residue polypeptide: Multidrug resistance protein MdtK (457 aa).

Helical transmembrane passes span 11–31 (LLALAIPVILAQVAQTAMGFV), 53–73 (IWLPAILFGHGLLLALTPVIA), 93–113 (WLASFVSVLVMIVLWNAGYII), 127–147 (AVGYLRALLWGAPGYLFFQVA), 160–180 (GMVMGFLGLLVNIPVNYIFIY), 188–208 (LGGIGCGVATAAVYWVMFIAM), 243–263 (LPIALALFFEVTLFAVVALLV), 276–296 (IALNFSSLMFVLPMSLAAAVT), 314–334 (AARTGLSVGVCMAVVTAIFTV), 357–377 (LMLLAAVYQISDSIQVIGSGI), 387–407 (IFFITFTAYWVLGLPSGYILA), and 418–438 (PAGFWMGFIIGLTSAAVLMML).

This sequence belongs to the multi antimicrobial extrusion (MATE) (TC 2.A.66.1) family. MdtK subfamily.

It is found in the cell inner membrane. Its function is as follows. Multidrug efflux pump that functions probably as a Na(+)/drug antiporter. This chain is Multidrug resistance protein MdtK, found in Salmonella arizonae (strain ATCC BAA-731 / CDC346-86 / RSK2980).